The sequence spans 132 residues: Small ribosomal subunit protein uS11 (132 aa).

Belongs to the universal ribosomal protein uS11 family. In terms of assembly, part of the 30S ribosomal subunit. Interacts with proteins S7 and S18. Binds to IF-3.

Functionally, located on the platform of the 30S subunit, it bridges several disparate RNA helices of the 16S rRNA. Forms part of the Shine-Dalgarno cleft in the 70S ribosome. This chain is Small ribosomal subunit protein uS11, found in Alcanivorax borkumensis (strain ATCC 700651 / DSM 11573 / NCIMB 13689 / SK2).